The sequence spans 151 residues: Ribosomal RNA large subunit methyltransferase H (151 aa).

S-adenosyl-L-methionine contacts are provided by residues Gly100 and 119 to 124 (LSKMTF).

This sequence belongs to the RNA methyltransferase RlmH family. Homodimer.

It localises to the cytoplasm. The enzyme catalyses pseudouridine(1915) in 23S rRNA + S-adenosyl-L-methionine = N(3)-methylpseudouridine(1915) in 23S rRNA + S-adenosyl-L-homocysteine + H(+). In terms of biological role, specifically methylates the pseudouridine at position 1915 (m3Psi1915) in 23S rRNA. The sequence is that of Ribosomal RNA large subunit methyltransferase H from Thermotoga sp. (strain RQ2).